The chain runs to 345 residues: Ninja-family protein AFP1 (345 aa).

Disordered stretches follow at residues 114–185 (TSLP…ATAN) and 201–256 (QVSG…RRLS). Composition is skewed to basic and acidic residues over residues 123–132 (EWRKRKEMQT) and 222–232 (LETKASSDEAR). Low complexity predominate over residues 235-249 (PSTTQPQQETTTKPT).

The protein belongs to the Ninja family. Forms a heterodimer with AFP2. Interacts with ABI5/DPBF1, DPBF2, AREB3/DPBF3, ABF1, ABF3/DPBF5 and ABF4/AREB2.

The protein resides in the nucleus. Functionally, acts as a negative regulator of abscisic acid (ABA) response during germination through the ubiquitin-mediated proteolysis of ABI5/DPBF1. This is Ninja-family protein AFP1 (AFP1) from Arabidopsis thaliana (Mouse-ear cress).